The chain runs to 319 residues: Acetyl esterase (319 aa).

The short motif at 91–93 (HGG) is the Involved in the stabilization of the negatively charged intermediate by the formation of the oxyanion hole element. Residues Ser-165, Asp-262, and His-292 contribute to the active site.

The protein belongs to the 'GDXG' lipolytic enzyme family. As to quaternary structure, homodimer. Interacts with MalT and MelA.

It localises to the cytoplasm. Functionally, displays esterase activity towards short chain fatty esters (acyl chain length of up to 8 carbons). Able to hydrolyze triacetylglycerol (triacetin) and tributyrylglycerol (tributyrin), but not trioleylglycerol (triolein) or cholesterol oleate. Negatively regulates MalT activity by antagonizing maltotriose binding. Inhibits MelA galactosidase activity. The protein is Acetyl esterase of Escherichia coli (strain ATCC 8739 / DSM 1576 / NBRC 3972 / NCIMB 8545 / WDCM 00012 / Crooks).